A 140-amino-acid chain; its full sequence is T cell receptor alpha chain constant (140 aa).

The Ig-like C1-type domain occupies 19-107; it reads KSVCLFTDFD…LVEKSFETDT (89 aa). A disulfide bridge links Cys22 with Cys72. N-linked (GlcNAc...) asparagine glycosylation is found at Asn32, Asn66, Asn77, and Asn113. The connecting peptide stretch occupies residues 94–115; that stretch reads CDVKLVEKSFETDTNLNFQNLS. Residues 116-138 traverse the membrane as a helical segment; that stretch reads VIGFRILLLKVAGFNLLMTLRLW. The Cytoplasmic segment spans residues 139–140; it reads SS.

In terms of assembly, alpha-beta TR is a heterodimer composed of an alpha and beta chain; disulfide-linked. The alpha-beta TR is associated with the transmembrane signaling CD3 coreceptor proteins to form the TR-CD3 (TcR or TCR). The assembly of alpha-beta TR heterodimers with CD3 occurs in the endoplasmic reticulum where a single alpha-beta TR heterodimer associates with one CD3D-CD3E heterodimer, one CD3G-CD3E heterodimer and one CD247 homodimer forming a stable octameric structure. CD3D-CD3E and CD3G-CD3E heterodimers preferentially associate with TR alpha and TR beta chains, respectively. The association of the CD247 homodimer is the last step of TcR assembly in the endoplasmic reticulum and is required for transport to the cell surface.

It localises to the cell membrane. In terms of biological role, constant region of T cell receptor (TR) alpha chain. Alpha-beta T cell receptors are antigen specific receptors which are essential to the immune response and are present on the cell surface of T lymphocytes. Recognize peptide-major histocompatibility (MH) (pMH) complexes that are displayed by antigen presenting cells (APC), a prerequisite for efficient T cell adaptive immunity against pathogens. Binding of alpha-beta TR to pMH complex initiates TR-CD3 clustering on the cell surface and intracellular activation of LCK that phosphorylates the ITAM motifs of CD3G, CD3D, CD3E and CD247 enabling the recruitment of ZAP70. In turn, ZAP70 phosphorylates LAT, which recruits numerous signaling molecules to form the LAT signalosome. The LAT signalosome propagates signal branching to three major signaling pathways, the calcium, the mitogen-activated protein kinase (MAPK) kinase and the nuclear factor NF-kappa-B (NF-kB) pathways, leading to the mobilization of transcription factors that are critical for gene expression and essential for T cell growth and differentiation. The T cell repertoire is generated in the thymus, by V-(D)-J rearrangement. This repertoire is then shaped by intrathymic selection events to generate a peripheral T cell pool of self-MH restricted, non-autoaggressive T cells. Post-thymic interaction of alpha-beta TR with the pMH complexes shapes TR structural and functional avidity. This Homo sapiens (Human) protein is T cell receptor alpha chain constant.